The primary structure comprises 129 residues: Serum amyloid A-1 protein (129 aa).

The N-terminal stretch at Met-1–Ser-18 is a signal peptide. Residues Gln-19–Ala-44 form an important for amyloid formation region. The segment at Gly-92–Tyr-129 is disordered.

It belongs to the SAA family. Homohexamer; dimer of trimers. Can form amyloid fibrils after partial proteolysis; the native, undenatured protein does not form amyloid fibrils (in vitro). Apolipoprotein of the HDL complex. Binds to heparin. As to expression, detected in liver.

It is found in the secreted. Functionally, major acute phase protein. The protein is Serum amyloid A-1 protein (SAA1) of Neovison vison (American mink).